Consider the following 243-residue polypeptide: Type III pantothenate kinase (243 aa).

6 to 13 (DGGNTFIK) lines the ATP pocket. Substrate-binding positions include Tyr-87 and 94-97 (GKDR). Asp-96 acts as the Proton acceptor in catalysis. A K(+)-binding site is contributed by Asp-117. Thr-120 contributes to the ATP binding site. Residue Thr-172 coordinates substrate.

The protein belongs to the type III pantothenate kinase family. Homodimer. It depends on NH4(+) as a cofactor. K(+) serves as cofactor.

Its subcellular location is the cytoplasm. The catalysed reaction is (R)-pantothenate + ATP = (R)-4'-phosphopantothenate + ADP + H(+). The protein operates within cofactor biosynthesis; coenzyme A biosynthesis; CoA from (R)-pantothenate: step 1/5. Functionally, catalyzes the phosphorylation of pantothenate (Pan), the first step in CoA biosynthesis. This Christiangramia forsetii (strain DSM 17595 / CGMCC 1.15422 / KT0803) (Gramella forsetii) protein is Type III pantothenate kinase.